Here is a 137-residue protein sequence, read N- to C-terminus: ATP synthase epsilon chain, chloroplastic (137 aa).

This sequence belongs to the ATPase epsilon chain family. In terms of assembly, F-type ATPases have 2 components, CF(1) - the catalytic core - and CF(0) - the membrane proton channel. CF(1) has five subunits: alpha(3), beta(3), gamma(1), delta(1), epsilon(1). CF(0) has three main subunits: a, b and c.

Its subcellular location is the plastid. The protein resides in the chloroplast thylakoid membrane. In terms of biological role, produces ATP from ADP in the presence of a proton gradient across the membrane. The sequence is that of ATP synthase epsilon chain, chloroplastic from Bigelowiella natans (Pedinomonas minutissima).